The primary structure comprises 381 residues: tRNA N6-adenosine threonylcarbamoyltransferase (381 aa).

Residues His114 and His118 each coordinate Fe cation. Substrate is bound by residues 142-146, Asp178, Gly191, Asp195, and Asn321; that span reads VVSGG. Asp349 contacts Fe cation.

Belongs to the KAE1 / TsaD family. Fe(2+) is required as a cofactor.

It localises to the cytoplasm. The catalysed reaction is L-threonylcarbamoyladenylate + adenosine(37) in tRNA = N(6)-L-threonylcarbamoyladenosine(37) in tRNA + AMP + H(+). Its function is as follows. Required for the formation of a threonylcarbamoyl group on adenosine at position 37 (t(6)A37) in tRNAs that read codons beginning with adenine. Is involved in the transfer of the threonylcarbamoyl moiety of threonylcarbamoyl-AMP (TC-AMP) to the N6 group of A37, together with TsaE and TsaB. TsaD likely plays a direct catalytic role in this reaction. This Koribacter versatilis (strain Ellin345) protein is tRNA N6-adenosine threonylcarbamoyltransferase.